We begin with the raw amino-acid sequence, 256 residues long: Ras-related protein RabJ (256 aa).

Residue 16 to 23 coordinates GTP; sequence GSSDVGKT. An Effector region motif is present at residues 38–46; that stretch reads LTSTIGASF. GTP contacts are provided by residues 64–68 and 122–125; these read DSAGQ and NKID. The interval 229-256 is disordered; the sequence is NGHLQGSINGHNNQNSTNYSDNSDQCCG. Positions 230-256 are enriched in polar residues; that stretch reads GHLQGSINGHNNQNSTNYSDNSDQCCG. Residues Cys-254 and Cys-255 are each lipidated (S-geranylgeranyl cysteine).

This sequence belongs to the small GTPase superfamily. Rab family.

The protein localises to the cell membrane. This Dictyostelium discoideum (Social amoeba) protein is Ras-related protein RabJ (rabJ).